A 342-amino-acid polypeptide reads, in one-letter code: [Citrate [pro-3S]-lyase] ligase (342 aa).

The N-acetyltransferase domain maps to 1 to 127 (MTLILKRVQL…RAVLMENSRE (127 aa)).

It catalyses the reaction holo-[citrate lyase ACP] + acetate + ATP = acetyl-[citrate lyase ACP] + AMP + diphosphate. Functionally, acetylation of prosthetic group (2-(5''-phosphoribosyl)-3'-dephosphocoenzyme-A) of the gamma subunit of citrate lyase. The polypeptide is [Citrate [pro-3S]-lyase] ligase (citC) (Klebsiella pneumoniae).